The primary structure comprises 410 residues: Lipoyl synthase, mitochondrial (410 aa).

Positions 125, 130, 136, 157, 161, 164, and 373 each coordinate [4Fe-4S] cluster. In terms of domain architecture, Radical SAM core spans 140–362 (SDEEGTATAT…EKEAMDMGFL (223 aa)).

The protein belongs to the radical SAM superfamily. Lipoyl synthase family. Requires [4Fe-4S] cluster as cofactor.

Its subcellular location is the mitochondrion. The catalysed reaction is [[Fe-S] cluster scaffold protein carrying a second [4Fe-4S](2+) cluster] + N(6)-octanoyl-L-lysyl-[protein] + 2 oxidized [2Fe-2S]-[ferredoxin] + 2 S-adenosyl-L-methionine + 4 H(+) = [[Fe-S] cluster scaffold protein] + N(6)-[(R)-dihydrolipoyl]-L-lysyl-[protein] + 4 Fe(3+) + 2 hydrogen sulfide + 2 5'-deoxyadenosine + 2 L-methionine + 2 reduced [2Fe-2S]-[ferredoxin]. The protein operates within protein modification; protein lipoylation via endogenous pathway; protein N(6)-(lipoyl)lysine from octanoyl-[acyl-carrier-protein]: step 2/2. Functionally, catalyzes the radical-mediated insertion of two sulfur atoms into the C-6 and C-8 positions of the octanoyl moiety bound to the lipoyl domains of lipoate-dependent enzymes, thereby converting the octanoylated domains into lipoylated derivatives. In Leishmania major, this protein is Lipoyl synthase, mitochondrial.